Consider the following 122-residue polypeptide: Large ribosomal subunit protein uL14 (122 aa).

It belongs to the universal ribosomal protein uL14 family. In terms of assembly, part of the 50S ribosomal subunit. Forms a cluster with proteins L3 and L19. In the 70S ribosome, L14 and L19 interact and together make contacts with the 16S rRNA in bridges B5 and B8.

Functionally, binds to 23S rRNA. Forms part of two intersubunit bridges in the 70S ribosome. This chain is Large ribosomal subunit protein uL14, found in Ralstonia nicotianae (strain ATCC BAA-1114 / GMI1000) (Ralstonia solanacearum).